We begin with the raw amino-acid sequence, 490 residues long: Betaine aldehyde dehydrogenase (490 aa).

K(+)-binding residues include Ser-26, Ile-27, and Asp-93. 150-152 (GAW) serves as a coordination point for NAD(+). Catalysis depends on Lys-162, which acts as the Charge relay system. Residue 176 to 179 (KPSE) participates in NAD(+) binding. Val-180 contacts K(+). Residue 230-233 (GTDT) coordinates NAD(+). Position 246 (Leu-246) interacts with K(+). Glu-252 functions as the Proton acceptor in the catalytic mechanism. Residues Gly-254, Cys-286, and Glu-387 each coordinate NAD(+). The Nucleophile role is filled by Cys-286. The residue at position 286 (Cys-286) is a Cysteine sulfenic acid (-SOH). K(+) contacts are provided by Lys-457 and Gly-460. Residue Glu-464 is the Charge relay system of the active site.

It belongs to the aldehyde dehydrogenase family. As to quaternary structure, dimer of dimers. Requires K(+) as cofactor.

It catalyses the reaction betaine aldehyde + NAD(+) + H2O = glycine betaine + NADH + 2 H(+). It functions in the pathway amine and polyamine biosynthesis; betaine biosynthesis via choline pathway; betaine from betaine aldehyde: step 1/1. Functionally, involved in the biosynthesis of the osmoprotectant glycine betaine. Catalyzes the irreversible oxidation of betaine aldehyde to the corresponding acid. The polypeptide is Betaine aldehyde dehydrogenase (Pseudomonas syringae pv. tomato (strain ATCC BAA-871 / DC3000)).